The chain runs to 265 residues: Deoxyribose-phosphate aldolase 2 (265 aa).

Aspartate 108 functions as the Proton donor/acceptor in the catalytic mechanism. Lysine 173 functions as the Schiff-base intermediate with acetaldehyde in the catalytic mechanism. Lysine 207 acts as the Proton donor/acceptor in catalysis.

The protein belongs to the DeoC/FbaB aldolase family. DeoC type 2 subfamily.

The protein resides in the cytoplasm. It catalyses the reaction 2-deoxy-D-ribose 5-phosphate = D-glyceraldehyde 3-phosphate + acetaldehyde. The protein operates within carbohydrate degradation; 2-deoxy-D-ribose 1-phosphate degradation; D-glyceraldehyde 3-phosphate and acetaldehyde from 2-deoxy-alpha-D-ribose 1-phosphate: step 2/2. Functionally, catalyzes a reversible aldol reaction between acetaldehyde and D-glyceraldehyde 3-phosphate to generate 2-deoxy-D-ribose 5-phosphate. The polypeptide is Deoxyribose-phosphate aldolase 2 (deoC2) (Yersinia pestis).